The chain runs to 173 residues: Small ribosomal subunit protein uS9 (173 aa).

The disordered stretch occupies residues 20–53; that stretch reads SYTTESEVPVEGEYTSESVASRFGEPQPAAGLGR.

It belongs to the universal ribosomal protein uS9 family.

The sequence is that of Small ribosomal subunit protein uS9 from Streptomyces avermitilis (strain ATCC 31267 / DSM 46492 / JCM 5070 / NBRC 14893 / NCIMB 12804 / NRRL 8165 / MA-4680).